The chain runs to 2104 residues: Myosin type-2 heavy chain 2 (2104 aa).

The 51-residue stretch at 35 to 85 folds into the Myosin N-terminal SH3-like domain; it reads DERTWIWIPDSKESFVKAWIVEDLGEKYRVKLERDGSERIVDGFDAEKVNP. The region spanning 89–767 is the Myosin motor domain; the sequence is DMVDDMAALT…VLGSLEDRRN (679 aa). ATP is bound at residue 182–189; sequence GESGAGKT. The actin-binding stretch occupies residues 646 to 660; sequence LSSLMHQLEATQPHF. Residues 829 to 2104 are a coiled coil; sequence LGTTQTDEYL…RSNRSPSVLR (1276 aa). 2 disordered regions span residues 1245-1278 and 1398-1426; these read NRSVTQHTLDGNSPHPSFEEKHSGDPLKRIDGNN and MEFTGLKPLSPSKISNLPSSQPGSPSKRS. Over residues 1246–1259 the composition is skewed to polar residues; the sequence is RSVTQHTLDGNSPH. Over residues 1261–1278 the composition is skewed to basic and acidic residues; it reads SFEEKHSGDPLKRIDGNN. Residues 1409–1424 show a composition bias toward polar residues; that stretch reads SKISNLPSSQPGSPSK. Ser1421 carries the phosphoserine modification.

The protein belongs to the TRAFAC class myosin-kinesin ATPase superfamily. Myosin family. Binds to cdc4 and rlc1.

In terms of biological role, stabilizes the F-actin cables forming the F-actin ring that surrounds the nucleus during interphase. May work in conjunction with myo2. This chain is Myosin type-2 heavy chain 2 (myo3), found in Schizosaccharomyces pombe (strain 972 / ATCC 24843) (Fission yeast).